We begin with the raw amino-acid sequence, 405 residues long: MIRSILDNDLYKFTMQMAVLELFPNARAEYRFINRGAQSFTNDFVNELRRIINKDISKIALSEDEYIWLKDNCPFFKPSYIEYLKNFRFNPEEVKIVLTEDNELELCIEGPWHSSILWEIVLMSTISELYFTVTDNKGEEISASNANDPENTLMEEYSSFIGDMGKELDAKGCIFSEFGTRRRRGFKLHDKVVEVLHELDSFSGTSNVYFAKKYGVRPIGTIGHEWIMGNSALVGLRNANKFAFDNWVKVYKGDLSIALSDTFGSKPFFQNFSIGLAKIYDGVRHDSGDPIKFADEVIEHYKKLGIDPMKKVLVFSDSLHVSDAVKLKEYCSGRINCSFGIGTTLTNNPDFFSYNPPLNMVIKLHKIDGIPVVKLSDSVEKATGDKDALRVANYIFGRKGLDEQF.

Phosphohistidine; by autocatalysis is present on His224.

Belongs to the NAPRTase family. Transiently phosphorylated on a His residue during the reaction cycle. Phosphorylation strongly increases the affinity for substrates and increases the rate of nicotinate D-ribonucleotide production. Dephosphorylation regenerates the low-affinity form of the enzyme, leading to product release.

It carries out the reaction nicotinate + 5-phospho-alpha-D-ribose 1-diphosphate + ATP + H2O = nicotinate beta-D-ribonucleotide + ADP + phosphate + diphosphate. It functions in the pathway cofactor biosynthesis; NAD(+) biosynthesis; nicotinate D-ribonucleotide from nicotinate: step 1/1. Catalyzes the synthesis of beta-nicotinate D-ribonucleotide from nicotinate and 5-phospho-D-ribose 1-phosphate at the expense of ATP. The chain is Nicotinate phosphoribosyltransferase from Methanococcoides burtonii (strain DSM 6242 / NBRC 107633 / OCM 468 / ACE-M).